The primary structure comprises 127 residues: Aspartate 1-decarboxylase (127 aa).

Ser-25 serves as the catalytic Schiff-base intermediate with substrate; via pyruvic acid. Position 25 is a pyruvic acid (Ser) (Ser-25). Thr-57 is a binding site for substrate. Tyr-58 functions as the Proton donor in the catalytic mechanism. 73–75 (GAA) serves as a coordination point for substrate.

Belongs to the PanD family. Heterooctamer of four alpha and four beta subunits. It depends on pyruvate as a cofactor. Post-translationally, is synthesized initially as an inactive proenzyme, which is activated by self-cleavage at a specific serine bond to produce a beta-subunit with a hydroxyl group at its C-terminus and an alpha-subunit with a pyruvoyl group at its N-terminus.

Its subcellular location is the cytoplasm. The enzyme catalyses L-aspartate + H(+) = beta-alanine + CO2. It functions in the pathway cofactor biosynthesis; (R)-pantothenate biosynthesis; beta-alanine from L-aspartate: step 1/1. Catalyzes the pyruvoyl-dependent decarboxylation of aspartate to produce beta-alanine. This Clostridium botulinum (strain Okra / Type B1) protein is Aspartate 1-decarboxylase.